We begin with the raw amino-acid sequence, 477 residues long: UDP-sulfoquinovose synthase, chloroplastic (477 aa).

Positions 1 to 21 (MAHLLSASCPSVISLSSSSSK) are disordered. Residues 1–86 (MAHLLSASCP…TNNSSSKPKR (86 aa)) constitute a chloroplast transit peptide. NAD(+) contacts are provided by residues 95–96 (YC), 115–119 (DNLVR), 158–159 (DI), R184, and N202. R184 is a substrate binding site. Residues T228 and Y265 each contribute to the substrate site. The active site involves T228. NAD(+) contacts are provided by Y265 and K269. Residue Y265 is the Proton acceptor of the active site. Residue K269 is part of the active site. Q292 serves as a coordination point for substrate. V295 contributes to the NAD(+) binding site. Substrate contacts are provided by residues 322–325 (ALNR), 337–339 (TVY), and 410–412 (RVE).

It belongs to the NAD(P)-dependent epimerase/dehydratase family. As to quaternary structure, homodimer. Requires NAD(+) as cofactor.

It is found in the plastid. The protein resides in the chloroplast. It catalyses the reaction sulfite + UDP-alpha-D-glucose + H(+) = UDP-alpha-D-6-sulfoquinovose + H2O. Its activity is regulated as follows. Concentrations above 100 uM sulfite inhibit the reaction. Functionally, involved in the biosynthesis of sulfolipids found in thylakoid membranes. Converts UDP-glucose and sulfite to the sulfolipid head group precursor UDP-sulfoquinovose. The sequence is that of UDP-sulfoquinovose synthase, chloroplastic (SQD1) from Arabidopsis thaliana (Mouse-ear cress).